Reading from the N-terminus, the 731-residue chain is Autophagy-related protein 20 (731 aa).

Residues 1 to 22 (MSSVLRNQDNPPTISEVSSTTK) show a composition bias toward polar residues. The interval 1-130 (MSSVLRNQDN…NNKSNNVSRV (130 aa)) is disordered. Residues 31–41 (KQEEKEKEKEI) show a composition bias toward basic and acidic residues. Residues 69-82 (SFMTANSFNEGPNT) show a composition bias toward polar residues. 2 stretches are compositionally biased toward low complexity: residues 92-102 (NNNSSSNNNRG) and 113-128 (LLLYNTSNNNKSNNVS). A PX domain is found at 164–340 (IQITEAGNSN…KFLDPNANWG (177 aa)). A 1,2-diacyl-sn-glycero-3-phospho-(1D-myo-inositol-3-phosphate) contacts are provided by Arg205, Ser207, and Lys231. Positions 253–277 (SVAGSNGNSGGSGGGGASGGAGSGS) are disordered. Residues 259–277 (GNSGGSGGGGASGGAGSGS) show a composition bias toward gly residues. Arg306 provides a ligand contact to a 1,2-diacyl-sn-glycero-3-phospho-(1D-myo-inositol-3-phosphate). The segment at 586–626 (NSQVKPKNGKYNLEQQQSSTVSPAPPPGPPPSSSSSSSSSS) is disordered. The segment covering 608–617 (PAPPPGPPPS) has biased composition (pro residues).

This sequence belongs to the sorting nexin family.

The protein resides in the endosome membrane. The protein localises to the preautophagosomal structure membrane. Functionally, required for cytoplasm to vacuole transport (Cvt), pexophagy and mitophagy. Also involved in endoplasmic reticulum-specific autophagic process and is essential for the survival of cells subjected to severe ER stress. Functions in protein retrieval from the endocytic pathway. This is Autophagy-related protein 20 (ATG20) from Candida albicans (strain SC5314 / ATCC MYA-2876) (Yeast).